Reading from the N-terminus, the 586-residue chain is DNA-binding protein RFX8 (586 aa).

Positions 22–97 form a DNA-binding region, RFX-type winged-helix; it reads VIQWLVDNFC…YHYDGICIKK (76 aa).

Belongs to the RFX family.

The protein resides in the nucleus. Its function is as follows. May be a transcription factor. This Homo sapiens (Human) protein is DNA-binding protein RFX8 (RFX8).